The following is a 219-amino-acid chain: MSRMAFDRQKIVEAVKEAKARAKPRNFTQSVEVAVNLKDIDLKRPENRFKLEVVLPHGRGKDVKIAVIADGAVAEAARRLGLDVISSAELEEIAKSPRQARKLAKKYDFFIAEAPLMPKIGRYLGRYLGPRNKMPVVVPPTMTNIEPIVEKLKKTVRIQLKDNPVVHAPVGTEKMSDEQLAENIEAVLNAIIGKLERGENQIRSVYVKTTMGPAVRVEG.

This sequence belongs to the universal ribosomal protein uL1 family. As to quaternary structure, part of the 50S ribosomal subunit.

In terms of biological role, binds directly to 23S rRNA. Probably involved in E site tRNA release. Functionally, protein L1 is also a translational repressor protein, it controls the translation of its operon by binding to its mRNA. The protein is Large ribosomal subunit protein uL1 of Pyrococcus horikoshii (strain ATCC 700860 / DSM 12428 / JCM 9974 / NBRC 100139 / OT-3).